The chain runs to 374 residues: Alcohol dehydrogenase class-3 (374 aa).

Alanine 2 carries the post-translational modification N-acetylalanine. Zn(2+) contacts are provided by cysteine 45, histidine 67, cysteine 97, cysteine 100, cysteine 103, cysteine 111, and cysteine 174. An N6-succinyllysine modification is found at lysine 233. Serine 247 is modified (phosphoserine). Lysine 315 carries the post-translational modification N6-succinyllysine. 2 positions are modified to phosphoserine: serine 324 and serine 351.

This sequence belongs to the zinc-containing alcohol dehydrogenase family. Class-III subfamily. Homodimer. The cofactor is Zn(2+).

The protein localises to the cytoplasm. The catalysed reaction is a primary alcohol + NAD(+) = an aldehyde + NADH + H(+). It carries out the reaction a secondary alcohol + NAD(+) = a ketone + NADH + H(+). The enzyme catalyses S-(hydroxymethyl)glutathione + NADP(+) = S-formylglutathione + NADPH + H(+). It catalyses the reaction S-(hydroxymethyl)glutathione + NAD(+) = S-formylglutathione + NADH + H(+). The catalysed reaction is 20-oxo-(5Z,8Z,11Z,14Z)-eicosatetraenoate + NAD(+) + H2O = (5Z,8Z,11Z,14Z)-eicosatetraenedioate + NADH + 2 H(+). It carries out the reaction 20-hydroxy-(5Z,8Z,11Z,14Z)-eicosatetraenoate + NAD(+) = 20-oxo-(5Z,8Z,11Z,14Z)-eicosatetraenoate + NADH + H(+). The enzyme catalyses S-nitrosoglutathione + NADH + H(+) = S-(hydroxysulfenamide)glutathione + NAD(+). Functionally, catalyzes the oxidation of long-chain primary alcohols and the oxidation of S-(hydroxymethyl) glutathione. Also oxidizes long chain omega-hydroxy fatty acids, such as 20-HETE, producing both the intermediate aldehyde, 20-oxoarachidonate and the end product, a dicarboxylic acid, (5Z,8Z,11Z,14Z)-eicosatetraenedioate. Class-III ADH is remarkably ineffective in oxidizing ethanol. Required for clearance of cellular formaldehyde, a cytotoxic and carcinogenic metabolite that induces DNA damage. Also acts as a S-nitroso-glutathione reductase by catalyzing the NADH-dependent reduction of S-nitrosoglutathione, thereby regulating protein S-nitrosylation. The polypeptide is Alcohol dehydrogenase class-3 (Oryctolagus cuniculus (Rabbit)).